Consider the following 238-residue polypeptide: Probable transcriptional regulatory protein CF0838 (238 aa).

This sequence belongs to the TACO1 family.

It localises to the cytoplasm. This Chlamydia felis (strain Fe/C-56) (Chlamydophila felis) protein is Probable transcriptional regulatory protein CF0838.